Reading from the N-terminus, the 156-residue chain is Small ribosomal subunit protein uS7 (156 aa).

The protein belongs to the universal ribosomal protein uS7 family. As to quaternary structure, part of the 30S ribosomal subunit. Contacts proteins S9 and S11.

Its function is as follows. One of the primary rRNA binding proteins, it binds directly to 16S rRNA where it nucleates assembly of the head domain of the 30S subunit. Is located at the subunit interface close to the decoding center, probably blocks exit of the E-site tRNA. This is Small ribosomal subunit protein uS7 from Mannheimia succiniciproducens (strain KCTC 0769BP / MBEL55E).